The following is a 250-amino-acid chain: Bacteriorhodopsin-I (250 aa).

7 helical membrane passes run 7–27, 42–62, 81–101, 114–134, 139–159, 185–205, and 207–227; these read EGIW…YFIA, IATI…ALGF, YTDW…LAGA, VLMI…VLSA, LVWW…LFSS, VWLV…LVGI, and IETA…GIIL. The residue at position 220 (lysine 220) is an N6-(retinylidene)lysine.

It belongs to the archaeal/bacterial/fungal opsin family. The covalent binding of retinal to the apoprotein, bacterioopsin, generates bacteriorhodopsin.

Its subcellular location is the membrane. Its function is as follows. Light-driven proton pump. This chain is Bacteriorhodopsin-I (bop), found in Haloarcula marismortui (strain ATCC 43049 / DSM 3752 / JCM 8966 / VKM B-1809) (Halobacterium marismortui).